The chain runs to 652 residues: RNA-binding KH domain-containing protein RCF3 (652 aa).

Positions 1-14 (MERSRSKRNYHYDQ) are enriched in basic and acidic residues. Residues 1-63 (MERSRSKRNY…NGRPSKSHPE (63 aa)) are disordered. A compositionally biased stretch (gly residues) spans 34–55 (FGGGGGGNNRYRGGGGGGGGNG). KH domains lie at 67–139 (TTTY…QEAL) and 175–245 (RVVT…LAIV). Residues 253 to 307 (QHRDRSNFQGRSHSPERSFAAAGDDYMPQLRRQSSDRFPRGNFRNNNFSSRQSNY) form a disordered region. Over residues 292 to 306 (RGNFRNNNFSSRQSN) the composition is skewed to low complexity. KH domains are found at residues 324–391 (ELVF…QEAL), 408–476 (LITT…LVEL), and 576–640 (RSTL…QSLL).

Homodimer. Interacts with CPL1. Interacts with RS40 and RS41. Interacts with DRB1/HYL1 and SE. Interacts with CPL2. Expressed in roots, cotyledons, leaves, flowers and siliques.

Its subcellular location is the nucleus. The protein localises to the nucleus speckle. Functionally, acts as a negative regulator of osmotic stress-induced gene expression. Involved in the regulation of thermotolerance responses under heat stress. Functions as an upstream regulator of heat stress transcription factor (HSF) genes. Negatively regulates HSFA1A, HSFA1B and HSFA1D, but positively controls the expression of HSFA1E, HSFA3, HSFA9, HSFB3, and DREB2C. Forms a complex with CPL1 that modulates co-transcriptional processes such as mRNA capping and polyadenylation, and functions to repress stress-inducible gene expression. Regulates pre-mRNA processing under salt stress. Involved in primary miRNA processing and pri-miRNA biogenesis. Binds both intronless and intron-containing pri-miRNAs. Acts as a regulator of biotic stress response gene expression and basal JA-mediated responses involved in defense. Acts as a negative regulator of resistance to the fungal pathogen Fusarium oxysporum. The polypeptide is RNA-binding KH domain-containing protein RCF3 (Arabidopsis thaliana (Mouse-ear cress)).